We begin with the raw amino-acid sequence, 280 residues long: tRNase Z TRZ1 (280 aa).

This sequence belongs to the RNase Z family. As to quaternary structure, homodimer. It depends on Zn(2+) as a cofactor. Ca(2+) is required as a cofactor. The cofactor is Mn(2+). Requires Mg(2+) as cofactor.

The protein localises to the cytoplasm. The catalysed reaction is Endonucleolytic cleavage of RNA, removing extra 3' nucleotides from tRNA precursor, generating 3' termini of tRNAs. A 3'-hydroxy group is left at the tRNA terminus and a 5'-phosphoryl group is left at the trailer molecule.. Its function is as follows. Zinc phosphodiesterase, which displays tRNA 3'-processing endonuclease activity. Involved in tRNA maturation, by removing a 3'-trailer from precursor tRNA. Can use bis-(p-nitophenyl) phosphate (bpNPP) as substrate. Involved in the processing of small nucleolar RNAs (snoRNAs). This Arabidopsis thaliana (Mouse-ear cress) protein is tRNase Z TRZ1.